The primary structure comprises 388 residues: Lipid-A-disaccharide synthase (388 aa).

This sequence belongs to the LpxB family.

It carries out the reaction a lipid X + a UDP-2-N,3-O-bis[(3R)-3-hydroxyacyl]-alpha-D-glucosamine = a lipid A disaccharide + UDP + H(+). It participates in bacterial outer membrane biogenesis; LPS lipid A biosynthesis. Its function is as follows. Condensation of UDP-2,3-diacylglucosamine and 2,3-diacylglucosamine-1-phosphate to form lipid A disaccharide, a precursor of lipid A, a phosphorylated glycolipid that anchors the lipopolysaccharide to the outer membrane of the cell. This chain is Lipid-A-disaccharide synthase, found in Saccharophagus degradans (strain 2-40 / ATCC 43961 / DSM 17024).